The chain runs to 312 residues: CD-NTase-associated protein 12 (312 aa).

A TIR domain is found at 5 to 127; that stretch reads RLFIGSSSEE…FNGLTLARFD (123 aa).

It in the C-terminal section; belongs to the bacterial STING family. As to quaternary structure, forms homodimers; in the presence of c-di-GMP forms filaments with an ordered array of parallel-stacked subunits.

The enzyme catalyses NAD(+) + H2O = ADP-D-ribose + nicotinamide + H(+). NAD(+) hydrolase activity is strongly stimulated by c-di-GMP, weakly by 3'3'-cGAMP, very weakly by c-di-AMP but not at all by 2'3'-cGAMP. Self-association of TIR domains is required for NADase activity. Functionally, effector protein of a CBASS antiviral system with NAD(+) hydrolase activity. CBASS (cyclic oligonucleotide-based antiphage signaling system) provides immunity against bacteriophage. The CD-NTase protein synthesizes cyclic nucleotides in response to infection; these serve as specific second messenger signals. The signals activate a diverse range of effectors, leading to bacterial cell death and thus abortive phage infection. A type I-D CBASS(GG) system. Binds c-di-GMP, does not bind cUMP-AMP. Upon activation by c-di-GMP forms filaments which hydrolyze NAD(+); filament formation is required for enzyme activation. The polypeptide is CD-NTase-associated protein 12 (Niabella drilacis (strain DSM 25811 / CCM 8410 / CCUG 62505 / LMG 26954 / E90)).